The following is a 228-amino-acid chain: Large ribosomal subunit protein uL1 (228 aa).

Belongs to the universal ribosomal protein uL1 family. Part of the 50S ribosomal subunit.

Its function is as follows. Binds directly to 23S rRNA. The L1 stalk is quite mobile in the ribosome, and is involved in E site tRNA release. Protein L1 is also a translational repressor protein, it controls the translation of the L11 operon by binding to its mRNA. In Clavibacter michiganensis subsp. michiganensis (strain NCPPB 382), this protein is Large ribosomal subunit protein uL1.